The sequence spans 284 residues: Aminoglycoside 6-adenylyltransferase (284 aa).

Homodimer.

The protein localises to the cytoplasm. The enzyme catalyses streptomycin + ATP = 6-O-adenylylstreptomycin + diphosphate. The catalysed reaction is streptomycin + GTP = 6-O-guanylylstreptomycin + diphosphate. It catalyses the reaction streptidine + ATP = 6-O-adenylylstreptidine + diphosphate. In terms of biological role, mediates bacterial resistance to streptomycin. Adenylates streptomycin on the O-6 residue. Adenylates streptidine on the O-6 residue. Does not act on spectinomycin, neomycin-B or kanamycin. Specific for ATP and GTP nucleotides incorporating a purine ring. No reaction with CTP or UTP. The polypeptide is Aminoglycoside 6-adenylyltransferase (Bacillus subtilis (strain 168)).